The sequence spans 460 residues: Carboxypeptidase DacB (460 aa).

The first 28 residues, methionine 1–alanine 28, serve as a signal peptide directing secretion. Positions alanine 39–proline 64 are disordered. Serine 113 functions as the Acyl-ester intermediate in the catalytic mechanism. Catalysis depends on lysine 116, which acts as the Proton acceptor. Serine 294 is a catalytic residue.

Belongs to the peptidase S13 family.

In terms of biological role, carboxypeptidase that cleaves terminal D-alanine from peptidoglycan in the mycobacterial cell wall. May cleave L-Lys-D-Ala and/or D-Ala-D-Ala peptide bonds. Exerts important effects on mycobacterial cell morphology and cell division. The sequence is that of Carboxypeptidase DacB from Mycolicibacterium smegmatis (strain ATCC 700084 / mc(2)155) (Mycobacterium smegmatis).